The chain runs to 143 residues: Heat shock protein Hsp-16.48/Hsp-16.49 (143 aa).

The region spanning 35 to 140 is the sHSP domain; it reads HNSFNFSDNI…SSRSIPINFV (106 aa).

The protein belongs to the small heat shock protein (HSP20) family.

This is Heat shock protein Hsp-16.48/Hsp-16.49 (hsp-16.48) from Caenorhabditis elegans.